The sequence spans 710 residues: Lactoperoxidase (710 aa).

An N-terminal signal peptide occupies residues 1-22; the sequence is MKVLLRLPALLASLTLLQMAAS. Positions 23–98 are excised as a propeptide; that stretch reads TRNATRTATI…WEQSLKRLRR (76 aa). N-linked (GlcNAc...) asparagine glycans are attached at residues Asn-25, Asn-104, and Asn-131. Cysteines 130 and 143 form a disulfide. Asp-223 contributes to the heme b binding site. The active-site Proton acceptor is His-224. Position 225 (Asp-225) interacts with Ca(2+). A glycan (N-linked (GlcNAc...) asparagine) is linked at Asn-238. 2 cysteine pairs are disulfide-bonded: Cys-244-Cys-254 and Cys-248-Cys-272. Ca(2+) is bound by residues Thr-299, Phe-301, Asp-303, and Ser-305. Phosphoserine is present on Ser-313. The N-linked (GlcNAc...) asparagine glycan is linked to Asn-320. The cysteines at positions 352 and 363 are disulfide-linked. Heme b is bound by residues Glu-373 and His-466. Tyr-480 carries the 3'-nitrotyrosine modification. 2 disulfides stabilise this stretch: Cys-571/Cys-628 and Cys-669/Cys-694.

The protein belongs to the peroxidase family. XPO subfamily. Ca(2+) serves as cofactor. Heme b is required as a cofactor. As to expression, expressed in the lacrimal gland with higher levels and 3-fold higher activity in adult females than males and secreted into tears (at protein level).

The protein localises to the secreted. The protein resides in the cytoplasm. It catalyses the reaction 2 a phenolic donor + H2O2 = 2 a phenolic radical donor + 2 H2O. The enzyme catalyses thiocyanate + H2O2 + H(+) = hypothiocyanous acid + H2O. It carries out the reaction iodide + H2O2 = hypoiodite + H2O. In terms of biological role, heme-containing oxidoreductase which catalyzes the conversion of thiocyanate (SCN(-)) into antimicrobial agent hypothiocyanous acid (OSCN(-)) in the presence of hydrogen peroxide (H2O2). Also involved in the conversion of iodide (I(-)) into hypoiodite (IO(-)) in the presence of H2O2. Responsible for the inactivation of a wide range of micro-organisms and hence, important component of defense mechanism. May be implicated in airway host defense against infection. May contribute to maintaining an appropriate H2O2 cellular level, therefore protecting cells from H2O2-caused injuries and inflammation. The polypeptide is Lactoperoxidase (LPO) (Mesocricetus auratus (Golden hamster)).